Consider the following 522-residue polypeptide: Subtilisin-like protease 10 (522 aa).

The first 19 residues, Met-1 to Ala-19, serve as a signal peptide directing secretion. Positions Ala-20–Gln-117 are excised as a propeptide. The 78-residue stretch at Ser-36 to Ile-113 folds into the Inhibitor I9 domain. One can recognise a Peptidase S8 domain in the interval Asn-127–Thr-405. Catalysis depends on charge relay system residues Asp-159 and His-190. Asn-251 is a glycosylation site (N-linked (GlcNAc...) asparagine). Catalysis depends on Ser-348, which acts as the Charge relay system. Residues Ala-384 to Leu-397 show a composition bias toward polar residues. Positions Ala-384 to Arg-515 are disordered. Asn-392 and Asn-403 each carry an N-linked (GlcNAc...) asparagine glycan. Residues Ser-432–Asn-459 show a composition bias toward pro residues.

It belongs to the peptidase S8 family.

The protein resides in the secreted. In terms of biological role, secreted subtilisin-like serine protease with keratinolytic activity that contributes to pathogenicity. The protein is Subtilisin-like protease 10 (SUB10) of Arthroderma benhamiae (strain ATCC MYA-4681 / CBS 112371) (Trichophyton mentagrophytes).